The primary structure comprises 166 residues: Endoribonuclease YbeY (166 aa).

The Zn(2+) site is built by histidine 129, histidine 133, and histidine 139.

Belongs to the endoribonuclease YbeY family. Zn(2+) is required as a cofactor.

It localises to the cytoplasm. Its function is as follows. Single strand-specific metallo-endoribonuclease involved in late-stage 70S ribosome quality control and in maturation of the 3' terminus of the 16S rRNA. The chain is Endoribonuclease YbeY from Heliobacterium modesticaldum (strain ATCC 51547 / Ice1).